The primary structure comprises 313 residues: Homoserine O-succinyltransferase (313 aa).

The Acyl-thioester intermediate role is filled by cysteine 142. Substrate is bound by residues lysine 163 and serine 192. Residue histidine 235 is the Proton acceptor of the active site. Glutamate 237 is an active-site residue. Arginine 249 serves as a coordination point for substrate.

It belongs to the MetA family.

The protein localises to the cytoplasm. It catalyses the reaction L-homoserine + succinyl-CoA = O-succinyl-L-homoserine + CoA. Its pathway is amino-acid biosynthesis; L-methionine biosynthesis via de novo pathway; O-succinyl-L-homoserine from L-homoserine: step 1/1. Functionally, transfers a succinyl group from succinyl-CoA to L-homoserine, forming succinyl-L-homoserine. In Vibrio vulnificus (strain YJ016), this protein is Homoserine O-succinyltransferase.